A 140-amino-acid polypeptide reads, in one-letter code: Nucleoside diphosphate kinase (140 aa).

Lys-11, Phe-59, Arg-87, Thr-93, Arg-104, and Asn-114 together coordinate ATP. His-117 serves as the catalytic Pros-phosphohistidine intermediate.

Belongs to the NDK family. In terms of assembly, homotetramer. The cofactor is Mg(2+).

The protein resides in the cytoplasm. The enzyme catalyses a 2'-deoxyribonucleoside 5'-diphosphate + ATP = a 2'-deoxyribonucleoside 5'-triphosphate + ADP. It catalyses the reaction a ribonucleoside 5'-diphosphate + ATP = a ribonucleoside 5'-triphosphate + ADP. In terms of biological role, major role in the synthesis of nucleoside triphosphates other than ATP. The ATP gamma phosphate is transferred to the NDP beta phosphate via a ping-pong mechanism, using a phosphorylated active-site intermediate. This Bradyrhizobium sp. (strain BTAi1 / ATCC BAA-1182) protein is Nucleoside diphosphate kinase.